A 492-amino-acid polypeptide reads, in one-letter code: 3-octaprenyl-4-hydroxybenzoate carboxy-lyase (492 aa).

Position 177 (asparagine 177) interacts with Mn(2+). Prenylated FMN-binding positions include 180–182, 194–196, and 199–200; these read IYR, RWL, and RG. Glutamate 243 provides a ligand contact to Mn(2+). Residue aspartate 292 is the Proton donor of the active site.

The protein belongs to the UbiD family. As to quaternary structure, homohexamer. It depends on prenylated FMN as a cofactor. The cofactor is Mn(2+).

The protein localises to the cell membrane. It carries out the reaction a 4-hydroxy-3-(all-trans-polyprenyl)benzoate + H(+) = a 2-(all-trans-polyprenyl)phenol + CO2. It functions in the pathway cofactor biosynthesis; ubiquinone biosynthesis. Its function is as follows. Catalyzes the decarboxylation of 3-octaprenyl-4-hydroxy benzoate to 2-octaprenylphenol, an intermediate step in ubiquinone biosynthesis. The protein is 3-octaprenyl-4-hydroxybenzoate carboxy-lyase of Neisseria gonorrhoeae (strain ATCC 700825 / FA 1090).